Reading from the N-terminus, the 592-residue chain is Beta-fructofuranosidase, insoluble isoenzyme 2 (592 aa).

The signal sequence occupies residues 1–40 (MLIRCFHIKMALVTCFHSMLFLSAVVFIFSLDVNIRGVEA). The active site involves Asp-75. N-linked (GlcNAc...) asparagine glycans are attached at residues Asn-171, Asn-195, Asn-310, Asn-347, and Asn-568.

It belongs to the glycosyl hydrolase 32 family.

It is found in the secreted. It localises to the cell wall. The catalysed reaction is Hydrolysis of terminal non-reducing beta-D-fructofuranoside residues in beta-D-fructofuranosides.. Its function is as follows. May play an important role in phloem unloading and in stress response. In Daucus carota (Wild carrot), this protein is Beta-fructofuranosidase, insoluble isoenzyme 2 (INV2).